The following is a 395-amino-acid chain: Elongation factor Tu (395 aa).

Residues 10 to 204 (KPHVNIGTIG…AIDNWIPLPQ (195 aa)) enclose the tr-type G domain. Positions 19–26 (GHVDHGKT) are G1. 19 to 26 (GHVDHGKT) lines the GTP pocket. T26 lines the Mg(2+) pocket. The segment at 60-64 (GITIN) is G2. The tract at residues 81-84 (DCPG) is G3. Residues 81–85 (DCPGH) and 136–139 (NKVD) contribute to the GTP site. The segment at 136–139 (NKVD) is G4. Residues 174 to 176 (SAL) form a G5 region.

Belongs to the TRAFAC class translation factor GTPase superfamily. Classic translation factor GTPase family. EF-Tu/EF-1A subfamily. In terms of assembly, monomer.

It is found in the cytoplasm. It catalyses the reaction GTP + H2O = GDP + phosphate + H(+). Functionally, GTP hydrolase that promotes the GTP-dependent binding of aminoacyl-tRNA to the A-site of ribosomes during protein biosynthesis. In Azobacteroides pseudotrichonymphae genomovar. CFP2, this protein is Elongation factor Tu.